We begin with the raw amino-acid sequence, 570 residues long: Protein NRT1/ PTR FAMILY 8.1 (570 aa).

Thr-98 carries the post-translational modification Phosphothreonine. The next 10 helical transmembrane spans lie at 99 to 119, 140 to 160, 182 to 202, 210 to 230, 329 to 349, 377 to 397, 414 to 434, 454 to 474, 494 to 514, and 537 to 557; these read IATF…SASV, AVFF…KPCV, FFNW…TVLV, WGWG…FFFF, IITL…YSQM, LFDT…IIPL, MGIG…LEVV, IFWQ…TFIG, LSLT…TVVM, and YFFY…LWIS.

This sequence belongs to the major facilitator superfamily. Proton-dependent oligopeptide transporter (POT/PTR) (TC 2.A.17) family. In terms of tissue distribution, expressed in cotyledons, hypocotyls, leaves, roots, flowers, pistils and vascular tissue of sepals, anthers, carpels and funiculi. Not detected in seeds.

It is found in the cell membrane. Its function is as follows. Peptide transporter. Mediates the transport of di- and tripeptides. High affinity transporter with low selectivity. No transport of amino acids. This is Protein NRT1/ PTR FAMILY 8.1 (NPF8.1) from Arabidopsis thaliana (Mouse-ear cress).